The chain runs to 2774 residues: Teneurin-2 (2774 aa).

Residues 1–375 enclose the Teneurin N-terminal domain; sequence MDVKDRRHRS…KPSKYCSWKC (375 aa). The Cytoplasmic segment spans residues 1-379; sequence MDVKDRRHRS…YCSWKCAALS (379 aa). A phosphoserine mark is found at Ser90 and Ser124. The tract at residues 111–271 is disordered; that stretch reads TGSDADSDTE…HHHSSANSLN (161 aa). Residues 141–155 show a composition bias toward polar residues; it reads SSGLSSRENSALTLT. At Thr155 the chain carries Phosphothreonine. Ser157 is subject to Phosphoserine. The segment covering 159–168 has biased composition (basic and acidic residues); the sequence is NENKSDDDNG. A compositionally biased stretch (low complexity) spans 174-188; it reads TSSSSLLPSAQLPSS. Over residues 202 to 211 the composition is skewed to polar residues; the sequence is DSNTSHQIMD. The span at 229 to 240 shows a compositional bias: low complexity; sequence SGPQQASSSGPP. The helical transmembrane segment at 380–400 threads the bilayer; the sequence is AIAAALLLAILLAYFIAMHLL. The Extracellular segment spans residues 401–2774; it reads GLNWQLQPAD…FLRQNEMGKR (2374 aa). Asn443 and Asn482 each carry an N-linked (GlcNAc...) asparagine glycan. 8 EGF-like domains span residues 575-603, 605-634, 636-668, 669-701, 702-735, 738-766, 769-797, and 808-841; these read DCPR…ADCA, AACP…AECD, PMNQ…EHCE, EVDC…NCEL, ARVQ…PDCS, VCSV…AACD, VCHP…EHCT, and DGCP…PGCN. Cystine bridges form between Cys576–Cys586, Cys580–Cys591, Cys593–Cys602, Cys611–Cys622, Cys624–Cys633, Cys640–Cys651, Cys645–Cys656, Cys658–Cys667, Cys672–Cys683, Cys677–Cys688, Cys690–Cys699, Cys710–Cys723, Cys725–Cys734, Cys739–Cys749, Cys743–Cys754, Cys756–Cys765, Cys770–Cys780, Cys774–Cys785, Cys787–Cys796, Cys810–Cys820, Cys814–Cys829, and Cys831–Cys840. Residues Asn925, Asn948, and Asn1267 are each glycosylated (N-linked (GlcNAc...) asparagine). NHL repeat units lie at residues 1272–1316, 1342–1386, 1401–1452, 1474–1501, and 1530–1573; these read LELR…VKSL, ARCG…NGII, LSCD…IAGR, LESA…INRL, and CYSG…VSKN. One copy of the YD 1 repeat lies at 1583 to 1602; the sequence is YEAASPGEQELYVFNADGIH. Asn1616 carries an N-linked (GlcNAc...) asparagine glycan. YD repeat units lie at residues 1619–1639, 1682–1701, and 1702–1724; these read YSAD…LKIR, YDGN…WTTF, and YDYD…TSLH. Asn1712, Asn1749, Asn1773, Asn1807, and Asn1892 each carry an N-linked (GlcNAc...) asparagine glycan. 18 YD repeats span residues 1895 to 1914, 1936 to 1954, 1955 to 1975, 1982 to 1999, 2000 to 2021, 2022 to 2039, 2042 to 2062, 2065 to 2085, 2093 to 2113, 2119 to 2136, 2137 to 2163, 2165 to 2178, 2179 to 2202, 2205 to 2225, 2226 to 2246, 2248 to 2268, 2280 to 2300, and 2302 to 2322; these read YFFN…ERTD, YLDK…YIFE, YDSS…HSMS, YIRN…VIFD, YSDD…VFYK, YGKL…TAVT, YDET…FSCT, YRKV…EGMI, YHDN…TPLP, YDEI…GVIY, YDIN…IKEV, YEMF…MTVQ, YDSM…TKYT, YDGD…WRYS, YDLN…LMPL, YDLR…DDDG, YNSK…SVQY, and YDGV…LQYF. A glycan (N-linked (GlcNAc...) asparagine) is linked at Asn1993. N-linked (GlcNAc...) asparagine glycosylation occurs at Asn2197. Asn2337 is a glycosylation site (N-linked (GlcNAc...) asparagine). Residues 2348–2389 form a YD 23 repeat; sequence YDLQGHLFAMESSSGEEYYVASDNTGTPLAVFSINGLMIKQL. Asn2648 is a glycosylation site (N-linked (GlcNAc...) asparagine).

The protein belongs to the tenascin family. Teneurin subfamily. Homodimer; disulfide-linked. Heterodimer with either TENM1 or TENM3. May also form heterodimer with TENM4. Interacts with ADGRL1 isoform 2. In terms of processing, derives from the membrane form by proteolytic processing. Post-translationally, derives from the plasma membrane form by proteolytic cleavage and translocates to the nucleus. Homophilic binding of the C-terminal extracellular domain stimulates its proteolytic cleavage and release in the cytoplasmic. Is subjected to rapid degradation by the proteasome pathway. Expressed in the brain (at protein level).

Its subcellular location is the cell membrane. It is found in the presynaptic cell membrane. It localises to the postsynaptic cell membrane. The protein localises to the endoplasmic reticulum. The protein resides in the golgi apparatus. Its subcellular location is the synapse. It is found in the cell projection. It localises to the dendritic spine. The protein localises to the filopodium. The protein resides in the growth cone. Its subcellular location is the nucleus. It is found in the PML body. Its function is as follows. Involved in neural development, regulating the establishment of proper connectivity within the nervous system. Acts as a ligand of the ADGRL1 and ADGRL3 receptors that are expressed at the surface of adjacent cells. Promotes the formation of filopodia and enlarged growth cone in neuronal cells. Mediates axon guidance and homophilic and heterophilic cell-cell adhesion. May function as a cellular signal transducer. In terms of biological role, induces gene transcription inhibition. This is Teneurin-2 (Tenm2) from Rattus norvegicus (Rat).